We begin with the raw amino-acid sequence, 306 residues long: Recombination-associated protein RdgC (306 aa).

Belongs to the RdgC family.

The protein localises to the cytoplasm. It localises to the nucleoid. Its function is as follows. May be involved in recombination. The chain is Recombination-associated protein RdgC from Pseudomonas entomophila (strain L48).